The sequence spans 227 residues: Protein GET1 (227 aa).

At 1–3 (MSL) the chain is on the lumenal side. A helical membrane pass occupies residues 4 to 23 (LLTVFLIVFVTQLISWIGQN). Topologically, residues 24 to 107 (VLLEWAYNLY…SFSTKFNAVI (84 aa)) are cytoplasmic. Positions 72-96 (AKLRRSVDKGLAELEKLNSEIATAK) form a coiled coil. A helical transmembrane segment spans residues 108–128 (WALTSGVNLVIGWWYGRKAVF). Residues 129–151 (YLPEGWMGPLTWWFSFPFAPRGS) are Lumenal-facing. Residues 152–168 (VSVGVWSFACKRVLLVL) traverse the membrane as a helical segment. Topologically, residues 169–227 (ERMVKELFFAETQAKEVPVGFSPSSSSSSTPNPMSKASSGSPSPRRRTTVTVESEDEKS) are cytoplasmic. Residues 184–227 (EVPVGFSPSSSSSSTPNPMSKASSGSPSPRRRTTVTVESEDEKS) form a disordered region. A compositionally biased stretch (low complexity) spans 190–211 (SPSSSSSSTPNPMSKASSGSPS).

It belongs to the WRB/GET1 family. As to quaternary structure, interacts with GET3.

It is found in the endoplasmic reticulum membrane. Its function is as follows. Required for the post-translational delivery of tail-anchored (TA) proteins to the endoplasmic reticulum. Acts as a membrane receptor for soluble GET3, which recognizes and selectively binds the transmembrane domain of TA proteins in the cytosol. This chain is Protein GET1, found in Coprinopsis cinerea (strain Okayama-7 / 130 / ATCC MYA-4618 / FGSC 9003) (Inky cap fungus).